Consider the following 139-residue polypeptide: Endoribonuclease YbeY (139 aa).

3 residues coordinate Zn(2+): His-99, His-103, and His-109.

Belongs to the endoribonuclease YbeY family. Requires Zn(2+) as cofactor.

It localises to the cytoplasm. Functionally, single strand-specific metallo-endoribonuclease involved in late-stage 70S ribosome quality control and in maturation of the 3' terminus of the 16S rRNA. The protein is Endoribonuclease YbeY of Sulfurimonas denitrificans (strain ATCC 33889 / DSM 1251) (Thiomicrospira denitrificans (strain ATCC 33889 / DSM 1251)).